A 330-amino-acid polypeptide reads, in one-letter code: UDP-glucose 4-epimerase (330 aa).

Residues 11-12 (YI), 31-36 (DALYTG), 51-52 (DI), 73-77 (FAAYS), Asn92, Ser117, Tyr141, Lys145, and Phe169 contribute to the NAD(+) site. 2 residues coordinate substrate: Ser117 and Tyr141. Tyr141 (proton acceptor) is an active-site residue. Substrate-binding positions include Asn170, 189–190 (HL), 206–208 (TIF), Arg221, and 282–285 (RGGD).

Belongs to the NAD(P)-dependent epimerase/dehydratase family. In terms of assembly, homodimer. Requires NAD(+) as cofactor.

It catalyses the reaction UDP-alpha-D-glucose = UDP-alpha-D-galactose. The protein operates within carbohydrate metabolism; galactose metabolism. Its function is as follows. Involved in the metabolism of galactose. Catalyzes the conversion of UDP-galactose (UDP-Gal) to UDP-glucose (UDP-Glc) through a mechanism involving the transient reduction of NAD. It also could be involved in preparation of carbohydrate residues for incorporation into complex polymers, such as exopolysaccharides. The protein is UDP-glucose 4-epimerase (galE) of Lactobacillus helveticus (Lactobacillus suntoryeus).